The sequence spans 556 residues: 2-succinyl-5-enolpyruvyl-6-hydroxy-3-cyclohexene-1-carboxylate synthase (556 aa).

This sequence belongs to the TPP enzyme family. MenD subfamily. In terms of assembly, homodimer. It depends on Mg(2+) as a cofactor. Requires Mn(2+) as cofactor. The cofactor is thiamine diphosphate.

It carries out the reaction isochorismate + 2-oxoglutarate + H(+) = 5-enolpyruvoyl-6-hydroxy-2-succinyl-cyclohex-3-ene-1-carboxylate + CO2. The protein operates within quinol/quinone metabolism; 1,4-dihydroxy-2-naphthoate biosynthesis; 1,4-dihydroxy-2-naphthoate from chorismate: step 2/7. It functions in the pathway quinol/quinone metabolism; menaquinone biosynthesis. Functionally, catalyzes the thiamine diphosphate-dependent decarboxylation of 2-oxoglutarate and the subsequent addition of the resulting succinic semialdehyde-thiamine pyrophosphate anion to isochorismate to yield 2-succinyl-5-enolpyruvyl-6-hydroxy-3-cyclohexene-1-carboxylate (SEPHCHC). The sequence is that of 2-succinyl-5-enolpyruvyl-6-hydroxy-3-cyclohexene-1-carboxylate synthase from Shigella flexneri serotype 5b (strain 8401).